A 222-amino-acid polypeptide reads, in one-letter code: 3,4-dihydroxy-2-butanone 4-phosphate synthase (222 aa).

D-ribulose 5-phosphate-binding positions include R37 to E38, D42, R150 to T154, and E174. E38 is a binding site for Mg(2+). H153 contributes to the Mg(2+) binding site.

Belongs to the DHBP synthase family. In terms of assembly, homodimer. Mg(2+) is required as a cofactor. The cofactor is Mn(2+).

It catalyses the reaction D-ribulose 5-phosphate = (2S)-2-hydroxy-3-oxobutyl phosphate + formate + H(+). It functions in the pathway cofactor biosynthesis; riboflavin biosynthesis; 2-hydroxy-3-oxobutyl phosphate from D-ribulose 5-phosphate: step 1/1. Catalyzes the conversion of D-ribulose 5-phosphate to formate and 3,4-dihydroxy-2-butanone 4-phosphate. The sequence is that of 3,4-dihydroxy-2-butanone 4-phosphate synthase from Chlorobium limicola (strain DSM 245 / NBRC 103803 / 6330).